A 187-amino-acid polypeptide reads, in one-letter code: dCTP deaminase, dUMP-forming (187 aa).

Residues 101 to 106 (KSSLGR), D119, 127 to 129 (TLE), Q148, Y162, K170, and Q174 each bind dCTP. The Proton donor/acceptor role is filled by E129.

Belongs to the dCTP deaminase family. As to quaternary structure, homotrimer.

It catalyses the reaction dCTP + 2 H2O = dUMP + NH4(+) + diphosphate. It participates in pyrimidine metabolism; dUMP biosynthesis; dUMP from dCTP: step 1/1. In terms of biological role, bifunctional enzyme that catalyzes both the deamination of dCTP to dUTP and the hydrolysis of dUTP to dUMP without releasing the toxic dUTP intermediate. The protein is dCTP deaminase, dUMP-forming of Corynebacterium diphtheriae (strain ATCC 700971 / NCTC 13129 / Biotype gravis).